We begin with the raw amino-acid sequence, 39 residues long: Natriuretic peptide TNPc (39 aa).

Cysteine 9 and cysteine 25 form a disulfide bridge.

This sequence belongs to the natriuretic peptide family. In terms of tissue distribution, expressed by the venom gland.

Its subcellular location is the secreted. In terms of biological role, snake venom natriuretic peptide that exhibits vasoactive and hypotensive activity. Produces a near complete relaxation in pre-contracted aortae by activating the natriuretic peptide receptor 1 (NPR1). Stimulates cGMP production through the natriuretic peptide receptor 1 (NPR1) with high potencies for the rat NPR1 (EC(50)=100 nM), and very weak potencies over human NPR1 (28% activation at 10 uM). In vivo, reduces both systolic and diastolic blood pressure with no effect on heart rate, when intravenously injected in conscious rabbits. Also enhances the bradycardia due to cardiac afferent stimulation (Bezold-Jarisch reflex). The protein is Natriuretic peptide TNPc of Oxyuranus microlepidotus (Inland taipan).